A 494-amino-acid polypeptide reads, in one-letter code: Amidophosphoribosyltransferase (494 aa).

A propeptide spanning residues 1–10 (MFNYSGLNEE) is cleaved from the precursor. The Nucleophile role is filled by Cys11. In terms of domain architecture, Glutamine amidotransferase type-2 spans 11 to 231 (CGVFGIWNHP…AGEYVVINDK (221 aa)). Residues Ser294, Asp356, and Asp357 each contribute to the Mg(2+) site.

The protein in the C-terminal section; belongs to the purine/pyrimidine phosphoribosyltransferase family. It depends on Mg(2+) as a cofactor.

It catalyses the reaction 5-phospho-beta-D-ribosylamine + L-glutamate + diphosphate = 5-phospho-alpha-D-ribose 1-diphosphate + L-glutamine + H2O. It participates in purine metabolism; IMP biosynthesis via de novo pathway; N(1)-(5-phospho-D-ribosyl)glycinamide from 5-phospho-alpha-D-ribose 1-diphosphate: step 1/2. Catalyzes the formation of phosphoribosylamine from phosphoribosylpyrophosphate (PRPP) and glutamine. This chain is Amidophosphoribosyltransferase, found in Staphylococcus aureus (strain MRSA252).